Here is a 386-residue protein sequence, read N- to C-terminus: Formate-dependent phosphoribosylglycinamide formyltransferase (386 aa).

N(1)-(5-phospho-beta-D-ribosyl)glycinamide is bound by residues 15-16 and glutamate 75; that span reads EL. Residues arginine 107, lysine 148, 153-158, 188-191, and glutamate 196 contribute to the ATP site; these read SSGKGQ and EQFI. Residues 112–301 enclose the ATP-grasp domain; sequence ALAAQQLNLQ…EFELHLRAIV (190 aa). Mg(2+) is bound by residues glutamate 260 and glutamate 272. Residues aspartate 279, lysine 349, and 356-357 each bind N(1)-(5-phospho-beta-D-ribosyl)glycinamide; that span reads RR.

It belongs to the PurK/PurT family. As to quaternary structure, homodimer.

It carries out the reaction N(1)-(5-phospho-beta-D-ribosyl)glycinamide + formate + ATP = N(2)-formyl-N(1)-(5-phospho-beta-D-ribosyl)glycinamide + ADP + phosphate + H(+). It functions in the pathway purine metabolism; IMP biosynthesis via de novo pathway; N(2)-formyl-N(1)-(5-phospho-D-ribosyl)glycinamide from N(1)-(5-phospho-D-ribosyl)glycinamide (formate route): step 1/1. Functionally, involved in the de novo purine biosynthesis. Catalyzes the transfer of formate to 5-phospho-ribosyl-glycinamide (GAR), producing 5-phospho-ribosyl-N-formylglycinamide (FGAR). Formate is provided by PurU via hydrolysis of 10-formyl-tetrahydrofolate. The sequence is that of Formate-dependent phosphoribosylglycinamide formyltransferase from Francisella tularensis subsp. tularensis (strain SCHU S4 / Schu 4).